Here is a 273-residue protein sequence, read N- to C-terminus: MASPQDNTPSGATPKPQTHEETPDQVKLRINGGERLNIRKNNPAETGFDPATSKWVNYFKVLTGSMTKEGQFHYREHLYRTNEERDLRRCEEQRDWLFRYSPVVRYMRDQIRLLGGELDADNVVCRRCPSRLTADGRILGQAGGFSPQHGILVCANSIRDRKHLEDTLAHEMVHAYDHLRWQVDFVGEKDLRHAACTEIRASMLSGECRWTREAFGRGNWTVTQQFQNCVRSRAIMSVRARARCRDTEHATKVVNQVWDSCFSDTRPFDEIYK.

The span at 1-11 shows a compositional bias: polar residues; it reads MASPQDNTPSG. The tract at residues 1–33 is disordered; that stretch reads MASPQDNTPSGATPKPQTHEETPDQVKLRINGG. Residues 17 to 27 show a composition bias toward basic and acidic residues; that stretch reads QTHEETPDQVK. Residue His170 coordinates a divalent metal cation. The active site involves Glu171. Position 174 (His174) interacts with a divalent metal cation.

Belongs to the peptidase M76 family.

Its subcellular location is the mitochondrion inner membrane. Has a dual role in the assembly of mitochondrial ATPase. Acts as a protease that removes N-terminal residues of mitochondrial ATPase CF(0) subunit 6 at the intermembrane space side. Also involved in the correct assembly of the membrane-embedded ATPase CF(0) particle, probably mediating association of subunit 6 with the subunit 9 ring. In Pyricularia oryzae (strain 70-15 / ATCC MYA-4617 / FGSC 8958) (Rice blast fungus), this protein is Mitochondrial inner membrane protease ATP23 (ATP23).